The following is a 162-amino-acid chain: 2-C-methyl-D-erythritol 2,4-cyclodiphosphate synthase (162 aa).

A divalent metal cation is bound by residues Asp-10 and His-12. Residues 10–12 (DVH) and 36–37 (HS) contribute to the 4-CDP-2-C-methyl-D-erythritol 2-phosphate site. His-44 is an a divalent metal cation binding site. Residues 58-60 (DIG), 63-67 (FPDTD), 102-108 (AQAPRMA), 134-137 (TTSE), Phe-141, and Arg-144 each bind 4-CDP-2-C-methyl-D-erythritol 2-phosphate.

The protein belongs to the IspF family. In terms of assembly, homotrimer. Requires a divalent metal cation as cofactor.

It catalyses the reaction 4-CDP-2-C-methyl-D-erythritol 2-phosphate = 2-C-methyl-D-erythritol 2,4-cyclic diphosphate + CMP. The protein operates within isoprenoid biosynthesis; isopentenyl diphosphate biosynthesis via DXP pathway; isopentenyl diphosphate from 1-deoxy-D-xylulose 5-phosphate: step 4/6. Functionally, involved in the biosynthesis of isopentenyl diphosphate (IPP) and dimethylallyl diphosphate (DMAPP), two major building blocks of isoprenoid compounds. Catalyzes the conversion of 4-diphosphocytidyl-2-C-methyl-D-erythritol 2-phosphate (CDP-ME2P) to 2-C-methyl-D-erythritol 2,4-cyclodiphosphate (ME-CPP) with a corresponding release of cytidine 5-monophosphate (CMP). The chain is 2-C-methyl-D-erythritol 2,4-cyclodiphosphate synthase from Chromohalobacter salexigens (strain ATCC BAA-138 / DSM 3043 / CIP 106854 / NCIMB 13768 / 1H11).